The chain runs to 261 residues: Sulfur carrier protein FdhD (261 aa).

Cys105 serves as the catalytic Cysteine persulfide intermediate. Residue 245 to 250 (FIRGDR) coordinates Mo-bis(molybdopterin guanine dinucleotide).

This sequence belongs to the FdhD family.

Its subcellular location is the cytoplasm. Functionally, required for formate dehydrogenase (FDH) activity. Acts as a sulfur carrier protein that transfers sulfur from IscS to the molybdenum cofactor prior to its insertion into FDH. This Listeria monocytogenes serotype 4b (strain F2365) protein is Sulfur carrier protein FdhD.